We begin with the raw amino-acid sequence, 630 residues long: A-type voltage-gated potassium channel KCND2 (630 aa).

Residues 1–184 are Cytoplasmic-facing; it reads MAAGVAAWLP…FENPHTSTMA (184 aa). Positions 2–20 are interaction with KCNIP1, KCNIP2, and other family members; sequence AAGVAAWLPFARAAAIGWM. Position 38 is a phosphothreonine (Thr-38). The interaction with KCNIP1 stretch occupies residues 71-90; that stretch reads ERDFFYHPETQQYFFDRDPD. The Zn(2+) site is built by His-105, Cys-111, Cys-132, and Cys-133. Residues 185–206 form a helical membrane-spanning segment; it reads LVFYYVTGFFIAVSVIANVVET. At 207-226 the chain is on the extracellular side; sequence VPCGSSPGHIKELPCGERYA. The helical transmembrane segment at 227 to 249 threads the bilayer; that stretch reads VAFFCLDTACVMIFTVEYLLRLA. At 250-256 the chain is on the cytoplasmic side; sequence AAPSRYR. A helical membrane pass occupies residues 257–281; that stretch reads FVRSVMSIIDVVAILPYYIGLVMTD. At 282 to 287 the chain is on the extracellular side; that stretch reads NEDVSG. The helical; Voltage-sensor transmembrane segment at 288–307 threads the bilayer; the sequence is AFVTLRVFRVFRIFKFSRHS. Residues 308–321 are Cytoplasmic-facing; that stretch reads QGLRILGYTLKSCA. The S4-S5 linker stretch occupies residues 308–321; that stretch reads QGLRILGYTLKSCA. The chain crosses the membrane as a helical span at residues 322–345; that stretch reads SELGFLLFSLTMAIIIFATVMFYA. Over 346-357 the chain is Extracellular; it reads EKGSSASKFTSI. The segment at residues 358-369 is an intramembrane region (helical); it reads PAAFWYTIVTMT. The K(+) site is built by Thr-370, Leu-371, Gly-372, and Tyr-373. A Selectivity filter motif is present at residues 370–375; that stretch reads TLGYGD. Residues 370–377 lie within the membrane without spanning it; it reads TLGYGDMV. Residues 378-380 are Extracellular-facing; that stretch reads PKT. The chain crosses the membrane as a helical span at residues 381 to 403; it reads IAGKIFGSICSLSGVLVIALPVP. Over 404–630 the chain is Cytoplasmic; that stretch reads VIVSNFSRIY…GGNIVRVSAL (227 aa). Ser-438 carries the phosphoserine modification. The tract at residues 474–489 is required for dendritic targeting; the sequence is FETQHHHLLHCLEKTT. The interval 474–630 is important for normal channel activation and inactivation, for interaction with KCNIP2, and probably other family members as well; sequence FETQHHHLLH…GGNIVRVSAL (157 aa). Residues Ser-548, Ser-552, Ser-572, and Ser-575 each carry the phosphoserine modification. The interval 600 to 623 is disordered; the sequence is IPTPPVTTPEGDDRPESPEYSGGN. Residues Thr-602 and Thr-607 each carry the phosphothreonine modification. A Phosphoserine modification is found at Ser-616. The PDZ-binding motif lies at 627-630; that stretch reads VSAL.

It belongs to the potassium channel family. D (Shal) (TC 1.A.1.2) subfamily. Kv4.2/KCND2 sub-subfamily. In terms of assembly, homotetramer or heterotetramer with KCND1 or KCND3. Associates with the regulatory subunits KCNIP2, KCNIP3 and KCNIP4. Interacts with the regulatory subunit KCNIP1; this interaction mediates the capture of both the N- and C-terminus of KCND2, preventing N-type inactivation and stabilizing the S6 conformation, thereby accelerating closed state inactivation and recovery. Interacts with DPP10, DLG4 and DLG1. In vivo, probably exists as heteromeric complex containing variable proportions of KCND1, KCND2, KCND3, KCNIP1, KCNIP2, KCNIP3, KCNIP4, DPP6 and DPP10. The tetrameric channel can associate with up to four regulatory subunits, such as KCNIP2 or KCNIP4. Interaction with KCNIP3 promotes tetramerization and formation of a functional potassium channel. Interaction with four KCNIP4 chains does not reduce interaction with DPP10. Probably part of a complex consisting of KCNIP1, KCNIP2 isoform 3 and KCND2. Interacts with FLNA and FLNC. Interacts with NCS1/FREQ. Identified in a complex with cAMP-dependent protein kinase (PKA), CAV3, AKAP6 and KCND3 in cardiac myocytes. Interacts (via S1 and S2 helices) with DPP6; this interaction stabilizes the conformation of the S1-S2 helices and facilitates S4 conformational change, including S4 sliding up and down, thereby accelerating activation, inactivation, and recovery. In terms of processing, phosphorylation at Ser-438 in response to MAPK activation is increased in stimulated dendrites. Interaction with KCNIP2 and DPP6 propomtes phosphorylation by PKA at Ser-552. Phosphorylation at Ser-552 has no effect on interaction with KCNIP3, but is required for the regulation of channel activity by KCNIP3. Phosphorylation at Ser-552 leads to KCND2 internalization. Phosphorylated by MAPK in response to signaling via the metabotropic glutamate receptor GRM5. Phosphorylation at Ser-616 is required for the down-regulation of neuronal A-type currents in response to signaling via GRM5. In terms of tissue distribution, detected in brain cortex, hippocampus, dentate gyrus, thalamus and cerebellum. Detected in neurons from the primary visual cortex. Detected in the supraoptic nucleus in hypothalamus, in hippocampus and the habenular nucleus of the thalamus. Detected in the bed nucleus of the stria terminalis. Detected in dendritic fields in the hippocampus CA1 layer, in stratum radiatum, stratum oriens, stratum lacunosum-moleculare and stratum pyramidale. Detected in dendritic fields in the hippocampus CA3 layer and in dentate gyrus. Detected in the cerebellum granule cell layer, where it localizes at synapses. Detected in the main olfactory bulb, especially in the granule cell layer and the external plexiform layer, but also the mitral layer. Detected in heart atrium and ventricle. Detected in heart left ventricle (at protein level). Highly expressed in heart and throughout the brain, with similar levels in cortex and hypothalamus, and much higher levels in hippocampus, dentate gyrus and the habenular nucleus of the thalamus. Detected in brain, and at lower levels in heart atrium and ventricle. Detected in neurons from the bed nucleus of the stria terminalis. Detected in aorta, cardiac and smooth muscle.

It localises to the cell membrane. The protein localises to the cell projection. It is found in the dendrite. Its subcellular location is the synapse. The protein resides in the perikaryon. It localises to the postsynaptic cell membrane. The protein localises to the dendritic spine. It is found in the sarcolemma. Its subcellular location is the cell junction. The protein resides in the membrane. It localises to the caveola. The catalysed reaction is K(+)(in) = K(+)(out). Its activity is regulated as follows. Inhibited by 5 mM 4-aminopyridine (4-AP). Not inhibited by dendrotoxins and by tetraethylammonium (TEA). Inhibited by 10 mM flecainide and 20 mM quinidine. Inhibited by the heteropodatoxins HpTx(1), HpTx(2), and HpTx(3). Its function is as follows. Voltage-gated potassium channel that mediates transmembrane potassium transport in excitable membranes, primarily in the brain, but also in rodent heart. Mediates the major part of the dendritic A-type current I(SA) in brain neurons. This current is activated at membrane potentials that are below the threshold for action potentials. It regulates neuronal excitability, prolongs the latency before the first spike in a series of action potentials, regulates the frequency of repetitive action potential firing, shortens the duration of action potentials and regulates the back-propagation of action potentials from the neuronal cell body to the dendrites. Contributes to the regulation of the circadian rhythm of action potential firing in suprachiasmatic nucleus neurons, which regulates the circadian rhythm of locomotor activity. Functions downstream of the metabotropic glutamate receptor GRM5 and plays a role in neuronal excitability and in nociception mediated by activation of GRM5. Mediates the transient outward current I(to) in rodent heart left ventricle apex cells, but not in human heart, where this current is mediated by another family member. Forms tetrameric potassium-selective channels through which potassium ions pass in accordance with their electrochemical gradient. The channel alternates between opened and closed conformations in response to the voltage difference across the membrane. Can form functional homotetrameric channels and heterotetrameric channels that contain variable proportions of KCND2 and KCND3; channel properties depend on the type of pore-forming alpha subunits that are part of the channel. In vivo, membranes probably contain a mixture of heteromeric potassium channel complexes. Interaction with specific isoforms of the regulatory subunits KCNIP1, KCNIP2, KCNIP3 or KCNIP4 strongly increases expression at the cell surface and thereby increases channel activity; it modulates the kinetics of channel activation and inactivation, shifts the threshold for channel activation to more negative voltage values, shifts the threshold for inactivation to less negative voltages and accelerates recovery after inactivation. Likewise, interaction with DPP6 or DPP10 promotes expression at the cell membrane and regulates both channel characteristics and activity. Upon depolarization, the channel goes from a resting closed state (C state) to an activated but non-conducting state (C* state), from there, the channel may either inactivate (I state) or open (O state). In Rattus norvegicus (Rat), this protein is A-type voltage-gated potassium channel KCND2.